A 312-amino-acid chain; its full sequence is RNA pseudouridylate synthase domain-containing protein 1 (312 aa).

Methionine 1 is subject to N-acetylmethionine. Aspartate 67 is an active-site residue. The interval 256 to 298 is disordered; that stretch reads ATPDPDPEDRGPRPGSPSALLPGPGRPPPPPTKPPETEAQRGP. A compositionally biased stretch (pro residues) spans 279 to 289; the sequence is PGRPPPPPTKP.

It belongs to the pseudouridine synthase RluA family.

This Homo sapiens (Human) protein is RNA pseudouridylate synthase domain-containing protein 1 (RPUSD1).